The primary structure comprises 631 residues: Anthrax toxin receptor-like (631 aa).

A signal peptide spans 1–27 (MGSHESLGPYFLVFLLLLLLPPPLFRA). Residues 28–353 (GSLRYHGPDW…TSTTCGIFRN (326 aa)) lie on the Extracellular side of the membrane. The VWFA domain maps to 76–246 (DLYFILDKSG…KALRSTIDAL (171 aa)). 3 residues coordinate a divalent metal cation: S84, S86, and T150. A helical transmembrane segment spans residues 354 to 374 (WLYFVPLLLLVPLLLCCVWRL). At 375-631 (CRKQTVKEPP…LSLPPSEPNF (257 aa)) the chain is on the cytoplasmic side. Positions 382 to 413 (EPPPVQKPEKEPEQEKPPSPPPPPPPPPPPLP) are disordered. The span at 388–397 (KPEKEPEQEK) shows a compositional bias: basic and acidic residues. The span at 398-413 (PPSPPPPPPPPPPPLP) shows a compositional bias: pro residues.

Belongs to the ATR family.

It is found in the membrane. In Homo sapiens (Human), this protein is Anthrax toxin receptor-like (ANTXRL).